The chain runs to 131 residues: Fumarate reductase subunit C (131 aa).

3 helical membrane passes run 30-50, 63-83, and 109-129; these read EGTAVPAVWFSIELIFGLFAL, FLQNPVIVIINLITLAAALLH, and IIKSLWAVTVVATIVILFVAL.

Belongs to the FrdC family. Part of an enzyme complex containing four subunits: a flavoprotein (FrdA), an iron-sulfur protein (FrdB), and two hydrophobic anchor proteins (FrdC and FrdD).

The protein resides in the cell inner membrane. In terms of biological role, two distinct, membrane-bound, FAD-containing enzymes are responsible for the catalysis of fumarate and succinate interconversion; fumarate reductase is used in anaerobic growth, and succinate dehydrogenase is used in aerobic growth. Anchors the catalytic components of the fumarate reductase complex to the cell inner membrane, binds quinones. This is Fumarate reductase subunit C from Shigella boydii serotype 18 (strain CDC 3083-94 / BS512).